Consider the following 254-residue polypeptide: 5-oxoprolinase subunit A (254 aa).

It belongs to the LamB/PxpA family. As to quaternary structure, forms a complex composed of PxpA, PxpB and PxpC.

It catalyses the reaction 5-oxo-L-proline + ATP + 2 H2O = L-glutamate + ADP + phosphate + H(+). Functionally, catalyzes the cleavage of 5-oxoproline to form L-glutamate coupled to the hydrolysis of ATP to ADP and inorganic phosphate. This Rhodopseudomonas palustris (strain ATCC BAA-98 / CGA009) protein is 5-oxoprolinase subunit A.